The following is a 557-amino-acid chain: Probable protein kinase UbiB (557 aa).

The Protein kinase domain occupies 121–509; sequence SFDTVPLASA…RKLQTRVVTA (389 aa). ATP is bound by residues 127–135 and K154; that span reads LASASIAQV. D289 functions as the Proton acceptor in the catalytic mechanism. The next 2 membrane-spanning stretches (helical) occupy residues 506 to 526 and 535 to 555; these read VVTAITGSGLLVVAAVLYGLH and VPVWSWISGGAGSAALLVAWL.

It belongs to the ABC1 family. UbiB subfamily.

Its subcellular location is the cell inner membrane. It participates in cofactor biosynthesis; ubiquinone biosynthesis [regulation]. Functionally, is probably a protein kinase regulator of UbiI activity which is involved in aerobic coenzyme Q (ubiquinone) biosynthesis. This Xanthomonas oryzae pv. oryzae (strain MAFF 311018) protein is Probable protein kinase UbiB.